The chain runs to 411 residues: Serine hydroxymethyltransferase (411 aa).

(6S)-5,6,7,8-tetrahydrofolate is bound by residues Leu-113 and 117–119 (GHL). N6-(pyridoxal phosphate)lysine is present on Lys-222. 346 to 348 (SPF) contacts (6S)-5,6,7,8-tetrahydrofolate.

This sequence belongs to the SHMT family. As to quaternary structure, homodimer. Pyridoxal 5'-phosphate is required as a cofactor.

Its subcellular location is the cytoplasm. The enzyme catalyses (6R)-5,10-methylene-5,6,7,8-tetrahydrofolate + glycine + H2O = (6S)-5,6,7,8-tetrahydrofolate + L-serine. Its pathway is one-carbon metabolism; tetrahydrofolate interconversion. It functions in the pathway amino-acid biosynthesis; glycine biosynthesis; glycine from L-serine: step 1/1. In terms of biological role, catalyzes the reversible interconversion of serine and glycine with tetrahydrofolate (THF) serving as the one-carbon carrier. This reaction serves as the major source of one-carbon groups required for the biosynthesis of purines, thymidylate, methionine, and other important biomolecules. Also exhibits THF-independent aldolase activity toward beta-hydroxyamino acids, producing glycine and aldehydes, via a retro-aldol mechanism. The chain is Serine hydroxymethyltransferase from Prochlorococcus marinus (strain NATL2A).